A 500-amino-acid chain; its full sequence is Probable malate:quinone oxidoreductase (500 aa).

This sequence belongs to the MQO family. FAD is required as a cofactor.

The catalysed reaction is (S)-malate + a quinone = a quinol + oxaloacetate. It participates in carbohydrate metabolism; tricarboxylic acid cycle; oxaloacetate from (S)-malate (quinone route): step 1/1. The sequence is that of Probable malate:quinone oxidoreductase from Bacillus cereus (strain AH187).